The chain runs to 592 residues: Aspartate--tRNA(Asp/Asn) ligase (592 aa).

Position 175 (Glu175) interacts with L-aspartate. The aspartate stretch occupies residues 199-202; sequence QLFK. Position 221 (Arg221) interacts with L-aspartate. ATP is bound by residues 221–223 and Gln230; that span reads RDE. Residue His450 coordinates L-aspartate. Glu483 provides a ligand contact to ATP. Arg490 contributes to the L-aspartate binding site. An ATP-binding site is contributed by 535–538; sequence GLDR.

The protein belongs to the class-II aminoacyl-tRNA synthetase family. Type 1 subfamily. In terms of assembly, homodimer.

Its subcellular location is the cytoplasm. The enzyme catalyses tRNA(Asx) + L-aspartate + ATP = L-aspartyl-tRNA(Asx) + AMP + diphosphate. In terms of biological role, aspartyl-tRNA synthetase with relaxed tRNA specificity since it is able to aspartylate not only its cognate tRNA(Asp) but also tRNA(Asn). Reaction proceeds in two steps: L-aspartate is first activated by ATP to form Asp-AMP and then transferred to the acceptor end of tRNA(Asp/Asn). The sequence is that of Aspartate--tRNA(Asp/Asn) ligase from Acinetobacter baumannii (strain ATCC 17978 / DSM 105126 / CIP 53.77 / LMG 1025 / NCDC KC755 / 5377).